A 145-amino-acid chain; its full sequence is Hemoglobin subunit beta (145 aa).

A Globin domain is found at 1–145; that stretch reads MLTSEEKAAV…VANALAHRYH (145 aa). A Phosphothreonine modification is found at Thr-11. Residue Lys-58 is modified to N6-acetyllysine. His-62 lines the heme b pocket. N6-acetyllysine is present on Lys-81. His-91 is a binding site for heme b. Cys-92 carries the post-translational modification S-nitrosocysteine.

This sequence belongs to the globin family. Heterotetramer of two alpha chains and two beta chains. Red blood cells.

Its function is as follows. Involved in oxygen transport from the lung to the various peripheral tissues. This is Hemoglobin subunit beta (HBB) from Rangifer tarandus (Reindeer).